The primary structure comprises 666 residues: Endogenous retrovirus group K member 21 Gag polyprotein (666 aa).

Glycine 2 is lipidated: N-myristoyl glycine. Disordered regions lie at residues 165-189 (GKGP…AGQV) and 217-264 (ELQY…GSEL). Pro residues predominate over residues 232–247 (GMPPAPQGRAPYPQPP). CCHC-type zinc fingers lie at residues 544 to 561 (GKCY…NCPV) and 580 to 597 (DLCP…QCRS). A disordered region spans residues 598–641 (KFDKNGQPLSGNEQRGQPQAPQQTGAFPIQPFVPQGFQGQQPPL). Positions 604 to 622 (QPLSGNEQRGQPQAPQQTG) are enriched in polar residues. A compositionally biased stretch (low complexity) spans 624-640 (FPIQPFVPQGFQGQQPP).

This sequence belongs to the beta type-B retroviral Gag protein family. HERV class-II K(HML-2) gag subfamily. Myristoylation is essential for retroviral assembly. Alteration of the glycine residue leads to a block in the budding of particles and an accumulation of Gag inside the cell. Post-translationally, specific enzymatic cleavages may yield mature proteins.

The protein resides in the cell membrane. The products of the Gag polyproteins of infectious retroviruses perform highly complex orchestrated tasks during the assembly, budding, maturation, and infection stages of the viral replication cycle. During viral assembly, the proteins form membrane associations and self-associations that ultimately result in budding of an immature virion from the infected cell. Gag precursors also function during viral assembly to selectively bind and package two plus strands of genomic RNA. Endogenous Gag proteins may have kept, lost or modified their original function during evolution. The chain is Endogenous retrovirus group K member 21 Gag polyprotein (ERVK-21) from Homo sapiens (Human).